The chain runs to 745 residues: Probable xyloglucan glycosyltransferase 3 (745 aa).

The next 2 helical transmembrane spans lie at 116-136 (GFLLLSLAMLAFETVAHLKGW) and 196-216 (IDYIAWAIQKLSGFCIALFMV). Residue Asp-300 is part of the active site. 2 residues coordinate substrate: Asp-359 and Asp-361. Residue Asp-453 is part of the active site. 4 helical membrane passes run 531-551 (LILPFYSFTLFCVILPLTMFV), 556-576 (LPIWVICYVPVIMSVLNILPA), 695-715 (IFKKELALAFLLLTAATRSLL), and 720-740 (LHFYFLLFQGVTFLAVGLDLI).

The protein belongs to the glycosyltransferase 2 family. Plant cellulose synthase-like C subfamily.

The protein resides in the golgi apparatus membrane. Probable beta-1,4-glucan synthase rather involved in the synthesis of the xyloglucan backbone than cellulose. Seems to work simultaneously with xyloglucan 6-xylosyltransferase. Xyloglucan is a noncellulosic polysaccharides of plant cell wall and consists of a glucan backbone substituted by xylose, galactose and fucose. This Oryza sativa subsp. japonica (Rice) protein is Probable xyloglucan glycosyltransferase 3 (CSLC3).